A 198-amino-acid polypeptide reads, in one-letter code: Nucleoid occlusion factor SlmA (198 aa).

Residues Asn-10–Leu-70 form the HTH tetR-type domain. The segment at residues Thr-33 to Phe-52 is a DNA-binding region (H-T-H motif). Residues Glu-117 to Arg-144 are a coiled coil.

Belongs to the nucleoid occlusion factor SlmA family. In terms of assembly, homodimer. Interacts with FtsZ.

The protein localises to the cytoplasm. It is found in the nucleoid. Functionally, required for nucleoid occlusion (NO) phenomenon, which prevents Z-ring formation and cell division over the nucleoid. Acts as a DNA-associated cell division inhibitor that binds simultaneously chromosomal DNA and FtsZ, and disrupts the assembly of FtsZ polymers. SlmA-DNA-binding sequences (SBS) are dispersed on non-Ter regions of the chromosome, preventing FtsZ polymerization at these regions. This chain is Nucleoid occlusion factor SlmA, found in Salmonella agona (strain SL483).